The primary structure comprises 4644 residues: Cytoplasmic dynein 1 heavy chain 1 (4644 aa).

At Ser-2 the chain carries N-acetylserine. Residues Ser-2–Asn-1865 are stem. Coiled coils occupy residues Ala-48–Asp-69, Ser-179–Ile-200, Ala-453–Ala-476, and Thr-541–Ala-564. Residue Ser-68 is modified to Phosphoserine. Residues Met-446–Ala-701 are interaction with DYNC1I2. Residues Ala-649–Ser-800 are interaction with DYNC1LI2. Lys-1123 is modified (N6-acetyllysine). Residues Thr-1169–Gln-1201 adopt a coiled-coil conformation. Ser-1228 carries the phosphoserine modification. 2 coiled-coil regions span residues Ala-1229 to Ser-1250 and Arg-1355 to Phe-1371. 4 AAA regions span residues Tyr-1866–Ser-2097, Glu-2178–Leu-2450, Glu-2554–Gly-2803, and Val-2897–Thr-3166. Residues Gly-1904–Thr-1911 and Gly-2222–Ser-2229 each bind ATP. The tract at residues Glu-2389–Pro-2409 is disordered. ATP contacts are provided by residues Gly-2593 to Thr-2600 and Gly-2935 to Thr-2942. Coiled coils occupy residues Glu-3187–Gln-3273, Ala-3394–Met-3498, and Glu-3735–Gln-3798. Positions Glu-3187–Met-3498 are stalk. An N6-acetyllysine modification is found at Lys-3478. AAA stretches follow at residues Leu-3551 to Arg-3780 and Ala-4003 to Thr-4219. Ser-4160 is modified (phosphoserine). Lys-4281 is modified (N6-acetyllysine). Thr-4364 carries the phosphothreonine modification.

The protein belongs to the dynein heavy chain family. Homodimer. The cytoplasmic dynein 1 complex consists of two catalytic heavy chains (HCs) and a number of non-catalytic subunits presented by intermediate chains (ICs), light intermediate chains (LICs) and light chains (LCs); the composition seems to vary in respect to the IC, LIC and LC composition. The heavy chain homodimer serves as a scaffold for the probable homodimeric assembly of the respective non-catalytic subunits. The ICs and LICs bind directly to the HC dimer and dynein LCs assemble on the IC dimer. Interacts with DYNC1LI1; DYNC1LI1 and DYNC1LI2 bind mutually exclusive to DYNC1H1. Interacts with DYNC1LI2; DYNC1LI1 and DYNC1LI2 bind mutually exclusive to DYNC1H1. Interacts with DYNC1I2. Interacts with BICD2. Interacts with DNALI1.

Its subcellular location is the cytoplasm. It localises to the cytoskeleton. Its function is as follows. Cytoplasmic dynein 1 acts as a motor for the intracellular retrograde motility of vesicles and organelles along microtubules. Dynein has ATPase activity; the force-producing power stroke is thought to occur on release of ADP. Plays a role in mitotic spindle assembly and metaphase plate congression. The protein is Cytoplasmic dynein 1 heavy chain 1 (Dync1h1) of Rattus norvegicus (Rat).